The chain runs to 214 residues: Adenylate kinase (214 aa).

10–15 (GAGKGT) contacts ATP. The segment at 30 to 59 (STGDMLRAAVKAGSELGLKAKEIMDAGKLV) is NMP. Residues Thr31, Arg36, 57–59 (KLV), 85–88 (GFPR), and Gln92 each bind AMP. The segment at 122 to 159 (GRRVHAASGRVYHVKFNPPKVEDKDDVTGEELTIRKDD) is LID. Residues Arg123 and 132–133 (VY) contribute to the ATP site. Residues Arg156 and Arg167 each coordinate AMP. Residue Arg200 participates in ATP binding.

Belongs to the adenylate kinase family. As to quaternary structure, monomer.

The protein localises to the cytoplasm. It carries out the reaction AMP + ATP = 2 ADP. The protein operates within purine metabolism; AMP biosynthesis via salvage pathway; AMP from ADP: step 1/1. Catalyzes the reversible transfer of the terminal phosphate group between ATP and AMP. Plays an important role in cellular energy homeostasis and in adenine nucleotide metabolism. The chain is Adenylate kinase from Yersinia pseudotuberculosis serotype O:1b (strain IP 31758).